The primary structure comprises 439 residues: Ribosomal protein uS12 methylthiotransferase RimO (439 aa).

Residues 5–115 (PKIGFVSLGC…LIEAVHTHAP (111 aa)) enclose the MTTase N-terminal domain. C14, C50, C79, C146, C150, and C153 together coordinate [4Fe-4S] cluster. The Radical SAM core domain maps to 132-369 (LTPRHYSYLK…MGLQAQISAD (238 aa)). The 68-residue stretch at 372 to 439 (QRFVGTEQQV…ESTEYDLIAD (68 aa)) folds into the TRAM domain.

This sequence belongs to the methylthiotransferase family. RimO subfamily. [4Fe-4S] cluster is required as a cofactor.

It is found in the cytoplasm. The enzyme catalyses L-aspartate(89)-[ribosomal protein uS12]-hydrogen + (sulfur carrier)-SH + AH2 + 2 S-adenosyl-L-methionine = 3-methylsulfanyl-L-aspartate(89)-[ribosomal protein uS12]-hydrogen + (sulfur carrier)-H + 5'-deoxyadenosine + L-methionine + A + S-adenosyl-L-homocysteine + 2 H(+). Functionally, catalyzes the methylthiolation of an aspartic acid residue of ribosomal protein uS12. The polypeptide is Ribosomal protein uS12 methylthiotransferase RimO (Francisella philomiragia subsp. philomiragia (strain ATCC 25017 / CCUG 19701 / FSC 153 / O#319-036)).